The sequence spans 373 residues: Leucine-, isoleucine-, valine-, threonine-, and alanine-binding protein (373 aa).

The first 26 residues, 1-26, serve as a signal peptide directing secretion; the sequence is MKKGTQRLSRLFAAMAIAGFASYSMA. An intrachain disulfide couples cysteine 80 to cysteine 105.

Belongs to the leucine-binding protein family.

The protein resides in the periplasm. Functionally, component of the high-affinity leucine, isoleucine, valine transport system I (LIV-I), which is operative without Na(+) and is specific for alanine and threonine, in addition to branched-chain amino acids. Binds L-leucine, L-isoleucine, L-valine, L-threonine and L-alanine with nanomolar affinities. Can also bind L-homoserine with high affinity. In Pseudomonas aeruginosa (strain ATCC 15692 / DSM 22644 / CIP 104116 / JCM 14847 / LMG 12228 / 1C / PRS 101 / PAO1), this protein is Leucine-, isoleucine-, valine-, threonine-, and alanine-binding protein (braC).